The primary structure comprises 211 residues: Ribosomal RNA small subunit methyltransferase G (211 aa).

S-adenosyl-L-methionine-binding positions include Gly73, Ile126–Glu127, and Arg142.

Belongs to the methyltransferase superfamily. RNA methyltransferase RsmG family.

The protein resides in the cytoplasm. The catalysed reaction is guanosine(527) in 16S rRNA + S-adenosyl-L-methionine = N(7)-methylguanosine(527) in 16S rRNA + S-adenosyl-L-homocysteine. Specifically methylates the N7 position of guanine in position 527 of 16S rRNA. The polypeptide is Ribosomal RNA small subunit methyltransferase G (Methylorubrum extorquens (strain CM4 / NCIMB 13688) (Methylobacterium extorquens)).